Here is a 394-residue protein sequence, read N- to C-terminus: Actin-related protein 2-A (394 aa).

Residues 160 to 162 (GDG), 214 to 218 (RMIKE), and 305 to 310 (GGSTMY) each bind ATP.

The protein belongs to the actin family. ARP2 subfamily. Component of the Arp2/3 complex composed of actr2/arp2, actr3/arp3, arpc1 (arpc1a or arpc1b), arpc2, arpc3, arpc4 and arpc5.

It is found in the cytoplasm. The protein resides in the cytoskeleton. It localises to the cell projection. Its subcellular location is the nucleus. In terms of biological role, ATP-binding component of the Arp2/3 complex, a multiprotein complex that mediates actin polymerization upon stimulation by nucleation-promoting factor (NPF). The Arp2/3 complex mediates the formation of branched actin networks in the cytoplasm, providing the force for cell motility. Seems to contact the pointed end of the daughter actin filament. In addition to its role in the cytoplasmic cytoskeleton, the Arp2/3 complex also promotes actin polymerization in the nucleus, thereby regulating gene transcription and repair of damaged DNA. The Arp2/3 complex promotes homologous recombination (HR) repair in response to DNA damage by promoting nuclear actin polymerization, leading to drive motility of double-strand breaks (DSBs). The polypeptide is Actin-related protein 2-A (actr2-a) (Xenopus laevis (African clawed frog)).